Here is a 434-residue protein sequence, read N- to C-terminus: MKRSISPDPFSSTKSPKLVHHSPDDGGAEGNPYRLPFTLSDENLSCLPISQAREPPPIFNLDPNSVKDTQDRNKLYLAKAWDLLKPAIKIILDDDEYKKPGDVLCFTTIFRAVKRACLGDPRQSELVFNLVKHECEPHIAELIQSLEKNCSGSDDPSVFLPHVYNRWLDFKRKMSLVSDVAMYQTLNGLTLWDVGQKLFHKQLSMAPQLQDQVITGILRLITDERLGKAANNTSDLLKNLMDMFRMQWQCTYVYKDPFLDSTSKFYAEEAEQVLQRSDISHYLKYVERTFLAEEEKCDKHYFFFSSSRSRLMKVLKSQLLEAHSSFLEEGFMLLMDESLIDDLRRMYRLFSMVDSEDYIDRILRAYILAKGEGARQEGSLQELHTSIDKIWHQCFGQDDLLDKTIRDCFEGFGLHVPGEFSDQLQWIDDDDDED.

A disordered region spans residues 1-34; sequence MKRSISPDPFSSTKSPKLVHHSPDDGGAEGNPYR.

The protein belongs to the cullin family.

The protein is Cullin-like protein 5 of Arabidopsis thaliana (Mouse-ear cress).